The primary structure comprises 27 residues: uncharacterized protein (27 aa).

It localises to the plastid. Its subcellular location is the chloroplast. This is an uncharacterized protein from Trieres chinensis (Marine centric diatom).